Reading from the N-terminus, the 441-residue chain is ACT domain-containing protein ACR8 (441 aa).

ACT domains lie at 34–110 (IVKV…NIEV), 115–196 (ALEL…SAAK), 248–324 (VVNV…ALEG), and 326–405 (RLEL…TMYH).

In terms of tissue distribution, expressed in roots, leaves, flowers and siliques.

Its function is as follows. May bind amino acids. The polypeptide is ACT domain-containing protein ACR8 (Arabidopsis thaliana (Mouse-ear cress)).